The following is a 247-amino-acid chain: tRNA pseudouridine synthase A (247 aa).

Asp52 (nucleophile) is an active-site residue. Tyr111 provides a ligand contact to substrate.

Belongs to the tRNA pseudouridine synthase TruA family. In terms of assembly, homodimer.

The catalysed reaction is uridine(38/39/40) in tRNA = pseudouridine(38/39/40) in tRNA. In terms of biological role, formation of pseudouridine at positions 38, 39 and 40 in the anticodon stem and loop of transfer RNAs. This Caulobacter vibrioides (strain ATCC 19089 / CIP 103742 / CB 15) (Caulobacter crescentus) protein is tRNA pseudouridine synthase A.